Reading from the N-terminus, the 914-residue chain is Serine/threonine-protein kinase MST20 (914 aa).

A compositionally biased stretch (polar residues) spans 1–12; sequence MDGHSNFTQPSD. 3 disordered regions span residues 1–140, 156–184, and 251–286; these read MDGH…QLQN, NQYS…LTFN, and AMSE…VLRK. Low complexity-rich tracts occupy residues 13–26, 63–72, and 79–97; these read TSHA…SSSS, RSSTSLRRAP, and TPTS…PSSS. A compositionally biased stretch (basic and acidic residues) spans 122–136; it reads ARDRDSDPARNDHGH. Residues 156–166 show a composition bias toward basic residues; the sequence is NQYSAASHRRS. Residues 175–184 are compositionally biased toward polar residues; the sequence is PQSSNSLTFN. The segment covering 271–280 has biased composition (basic and acidic residues); that stretch reads RYSDETKEPK. One can recognise a CRIB domain in the interval 306–319; sequence ISAPENPVHVTHVG. A disordered region spans residues 408 to 615; it reads SPMISPPASP…RHRSRQSNGL (208 aa). 2 stretches are compositionally biased toward low complexity: residues 516-548 and 562-576; these read AYPA…QAQA and QPQA…SQHQ. The span at 577–586 shows a compositional bias: polar residues; it reads YSRPTDANGA. Positions 587-596 are enriched in low complexity; the sequence is QQTQRPQQPQ. Residues 634–885 enclose the Protein kinase domain; sequence YRSFTKIGQG…AHDLLRHEFM (252 aa). ATP-binding positions include 640 to 648 and lysine 663; that span reads IGQGASGGV. Aspartate 753 serves as the catalytic Proton acceptor.

This sequence belongs to the protein kinase superfamily. STE Ser/Thr protein kinase family. STE20 subfamily.

It is found in the cytoplasm. Its subcellular location is the nucleus. The catalysed reaction is L-seryl-[protein] + ATP = O-phospho-L-seryl-[protein] + ADP + H(+). It catalyses the reaction L-threonyl-[protein] + ATP = O-phospho-L-threonyl-[protein] + ADP + H(+). MAP4K component of the MAPK pathway required for the mating pheromone response and the regulation of cell polarity and cell cycle. Phosphorylates histone H2B to form H2BS10ph. Is involved in conidiation, aerial hyphal growth and infection-related morphogenesis. The polypeptide is Serine/threonine-protein kinase MST20 (MST20) (Pyricularia oryzae (strain 70-15 / ATCC MYA-4617 / FGSC 8958) (Rice blast fungus)).